The chain runs to 269 residues: Exodeoxyribonuclease WalJ (269 aa).

Residues histidine 61, histidine 63, aspartate 65, histidine 66, and aspartate 150 each coordinate a divalent metal cation.

Belongs to the metallo-beta-lactamase superfamily. The cofactor is Fe(2+). Zn(2+) is required as a cofactor. Requires Mn(2+) as cofactor.

It is found in the cell membrane. 5'-&gt;3' double-stranded DNA exonuclease. May be involved in the WalK/WalR signal transduction pathway. Required for accurate coordination of cell division with DNA replication. May play a role in cell wall metabolism. This is Exodeoxyribonuclease WalJ from Streptococcus pneumoniae serotype 2 (strain D39 / NCTC 7466).